Here is a 570-residue protein sequence, read N- to C-terminus: Dihydroxy-acid dehydratase (570 aa).

[2Fe-2S] cluster is bound at residue C61. Residue D94 coordinates Mg(2+). C135 is a [2Fe-2S] cluster binding site. The Mg(2+) site is built by D136 and K137. K137 is modified (N6-carboxylysine). A [2Fe-2S] cluster-binding site is contributed by C207. Residue E459 coordinates Mg(2+). The active-site Proton acceptor is the S485.

It belongs to the IlvD/Edd family. In terms of assembly, homodimer. [2Fe-2S] cluster serves as cofactor. Requires Mg(2+) as cofactor.

It catalyses the reaction (2R)-2,3-dihydroxy-3-methylbutanoate = 3-methyl-2-oxobutanoate + H2O. The enzyme catalyses (2R,3R)-2,3-dihydroxy-3-methylpentanoate = (S)-3-methyl-2-oxopentanoate + H2O. It participates in amino-acid biosynthesis; L-isoleucine biosynthesis; L-isoleucine from 2-oxobutanoate: step 3/4. It functions in the pathway amino-acid biosynthesis; L-valine biosynthesis; L-valine from pyruvate: step 3/4. Its function is as follows. Functions in the biosynthesis of branched-chain amino acids. Catalyzes the dehydration of (2R,3R)-2,3-dihydroxy-3-methylpentanoate (2,3-dihydroxy-3-methylvalerate) into 2-oxo-3-methylpentanoate (2-oxo-3-methylvalerate) and of (2R)-2,3-dihydroxy-3-methylbutanoate (2,3-dihydroxyisovalerate) into 2-oxo-3-methylbutanoate (2-oxoisovalerate), the penultimate precursor to L-isoleucine and L-valine, respectively. This chain is Dihydroxy-acid dehydratase, found in Lactococcus lactis subsp. cremoris (strain MG1363).